Reading from the N-terminus, the 1142-residue chain is ABC transporter F family member 4 (1142 aa).

The interval 1-564 (MGPKGKKKGQ…EDAFELAKKK (564 aa)) is disordered. Composition is skewed to low complexity over residues 121–143 (PQPVKKGGKPAPQKKGGKQQQQQ), 153–166 (PQPVKKGGKPAPQK), and 182–195 (PQPVKKGGKPAPQK). Composition is skewed to acidic residues over residues 203–212 (SEDEDEEDEV) and 233–244 (EEEEEEEEEEIE). Basic residues-rich tracts occupy residues 249-261 (KGGKAPKPKKGGK) and 280-290 (KGGKKDKKKGS). The span at 295–306 (EEEEEEEEEEIE) shows a compositional bias: acidic residues. Residues 314–328 (NKKDQKKGGKGKHVE) show a composition bias toward basic and acidic residues. Residues 329-340 (EEEEEEEEEEIE) are compositionally biased toward acidic residues. Residues 377-387 (KGGKKDKKKGS) are compositionally biased toward basic residues. Composition is skewed to acidic residues over residues 392-404 (EEEEEEEEEEEIE) and 441-451 (EEEEQEQEEEE). Residues 456 to 467 (SKSNKKDKKKGK) are compositionally biased toward basic residues. Acidic residues predominate over residues 471-480 (EEEEEEEEEE). The segment covering 485–496 (SKSNKKDKKKGS) has biased composition (basic residues). Acidic residues predominate over residues 501-518 (EEEEEEEEEEEEEKEEEE). Basic residues predominate over residues 530–548 (AKKVKKVDKKEKKKEKEKK). 2 ABC transporter domains span residues 604-857 (IKFD…RSKE) and 923-1139 (LVFK…DNMV). ATP is bound by residues 636–643 (GRNGIGKS) and 956–963 (GMNGVGKS).

Belongs to the ABC transporter superfamily.

The sequence is that of ABC transporter F family member 4 (abcF4) from Dictyostelium discoideum (Social amoeba).